We begin with the raw amino-acid sequence, 365 residues long: Membrane cofactor protein (365 aa).

Positions 1–44 (MTAAPLMPDSTHPCRRRKSYTFFWCSLGVYAEALLFLLSHLSDA) are cleaved as a signal peptide. Sushi domains are found at residues 45–106 (CELP…GCIK), 107–170 (VQCT…HCEK), 171–236 (IYCL…ECKV), and 237–296 (VKCP…KCLK). Over 45–329 (CELPRPFEAM…GIFSQELDAW (285 aa)) the chain is Extracellular. Disulfide bonds link Cys109/Cys151, Cys137/Cys168, Cys173/Cys221, Cys202/Cys234, Cys239/Cys281, and Cys267/Cys294. An N-linked (GlcNAc...) asparagine glycan is attached at Asn181. O-linked (GalNAc...) threonine glycosylation is present at Thr205. O-linked (GalNAc...) threonine glycans are attached at residues Thr301 and Thr304. Asn310 carries N-linked (GlcNAc...) asparagine glycosylation. The O-linked (GalNAc...) threonine glycan is linked to Thr312. A helical transmembrane segment spans residues 330-350 (IIALIVITSIVGVFILCLIVL). At 351–365 (RCFEHRKKTNVSAAR) the chain is on the cytoplasmic side.

In terms of assembly, interacts with C3b. Interacts with C4b. Interacts with moesin/MSN. May be O-glycosylated. In terms of processing, N-glycosylated. Present only in testis (at protein level).

It is found in the cytoplasmic vesicle. Its subcellular location is the secretory vesicle. The protein resides in the acrosome inner membrane. The protein localises to the secreted. Its function is as follows. May be involved in the fusion of the spermatozoa with the oocyte during fertilization. This chain is Membrane cofactor protein (Cd46), found in Mus musculus (Mouse).